The primary structure comprises 230 residues: Lactate utilization protein C (230 aa).

It belongs to the LutC/YkgG family.

Is involved in L-lactate degradation and allows cells to grow with lactate as the sole carbon source. In Halalkalibacterium halodurans (strain ATCC BAA-125 / DSM 18197 / FERM 7344 / JCM 9153 / C-125) (Bacillus halodurans), this protein is Lactate utilization protein C.